A 359-amino-acid polypeptide reads, in one-letter code: DNA replication and repair protein RecF (359 aa).

Residue 30–37 participates in ATP binding; the sequence is GPNGSGKT.

The protein belongs to the RecF family.

It is found in the cytoplasm. The RecF protein is involved in DNA metabolism; it is required for DNA replication and normal SOS inducibility. RecF binds preferentially to single-stranded, linear DNA. It also seems to bind ATP. This chain is DNA replication and repair protein RecF, found in Aliivibrio fischeri (strain ATCC 700601 / ES114) (Vibrio fischeri).